The chain runs to 454 residues: L-cysteine desulfhydrase (454 aa).

The interval methionine 1–alanine 25 is disordered. Basic residues predominate over residues histidine 14–arginine 23. Position 257 is an N6-(pyridoxal phosphate)lysine (lysine 257).

Belongs to the class-V pyridoxal-phosphate-dependent aminotransferase family. Pyridoxal 5'-phosphate is required as a cofactor. In terms of tissue distribution, highly expressed in stems and cauline leaves, and at lower levels in roots, rosette leaves and flowers.

The enzyme catalyses L-cysteine + H2O = hydrogen sulfide + pyruvate + NH4(+) + H(+). In terms of biological role, catalyzes the production of hydrogen sulfide (H2S) from cysteine. Is mainly responsible for the degradation of cysteine to generate H2S, a regulator of stomatal movement and closure. The polypeptide is L-cysteine desulfhydrase (LCD) (Arabidopsis thaliana (Mouse-ear cress)).